The chain runs to 1146 residues: Lysine-specific demethylase 2A (1146 aa).

One can recognise a JmjC domain in the interval 146-314 (FSHTKLENLV…MQLRIYSIED (169 aa)). Threonine 207 is a substrate binding site. Fe cation is bound by residues histidine 210 and aspartate 212. Lysine 227 serves as a coordination point for substrate. Fe cation is bound at residue histidine 282. Disordered stretches follow at residues 363-467 (LNGR…PDSP) and 554-585 (TKPH…SSGA). Positions 373–387 (SSSSSSSSSGLSSSS) are enriched in low complexity. Residues 388 to 401 (DNDDSSDQDWEEEE) show a composition bias toward acidic residues. The span at 402–442 (GLRKRERDRCRVERELQRKRNRDRQQRDQERDRHGRTERII) shows a compositional bias: basic and acidic residues. Residues 453–467 (LTPPPSLPLPTPDSP) are compositionally biased toward pro residues. A compositionally biased stretch (low complexity) spans 566 to 584 (STAPPRTSGTPSGTTASSG). Residues 585–631 (ARRRRVRCRKCQACVQRECGTCHYCKDMKKFGGPGRMKQSCVLRQCL) form a CXXC-type zinc finger. Residues cysteine 592, cysteine 595, cysteine 598, cysteine 603, cysteine 606, cysteine 609, cysteine 625, and cysteine 630 each contribute to the Zn(2+) site. The segment at 638-699 (SVTCALCGEV…YWECPKCYEG (62 aa)) adopts a PHD-type zinc-finger fold. Disordered stretches follow at residues 733-800 (VLRP…EGDR) and 832-867 (TPNP…ENVM). A compositionally biased stretch (pro residues) spans 739–762 (GQSPPSPPLLLLPPSPSSAPPTPP). Over residues 772-789 (SREERAKRRQLAREKENH) the composition is skewed to basic and acidic residues. The segment covering 849–864 (EREEEEEEEEEEEETE) has biased composition (acidic residues). The region spanning 874–919 (STSMQKDVWLSVFHYLTHEELCICMRVCKAWYKWGCDKRLWSRIDV) is the F-box domain. LRR repeat units lie at residues 945–966 (WTNV…LKDL), 968–994 (LAGC…DLRW), 1032–1057 (GLDI…DLSH), 1058–1087 (CPLL…HLAG), 1088–1112 (CKGV…DLHG), and 1113–1138 (CKQV…CLSD).

It belongs to the JHDM1 histone demethylase family. The cofactor is Fe(2+).

Its subcellular location is the nucleus. It localises to the nucleoplasm. It catalyses the reaction N(6),N(6)-dimethyl-L-lysyl(36)-[histone H3] + 2 2-oxoglutarate + 2 O2 = L-lysyl(36)-[histone H3] + 2 formaldehyde + 2 succinate + 2 CO2. In terms of biological role, histone demethylase that specifically demethylates 'Lys-36' of histone H3, thereby playing a central role in histone code. Preferentially demethylates dimethylated H3 'Lys-36' residue while it has weak or no activity for mono- and tri-methylated H3 'Lys-36'. May also recognize and bind to some phosphorylated proteins and promote their ubiquitination and degradation. Required to maintain the heterochromatic state. Associates with centromeres and represses transcription of small non-coding RNAs that are encoded by the clusters of satellite repeats at the centromere. Required to sustain centromeric integrity and genomic stability, particularly during mitosis. May play a role in the regulation of circadian gene expression. In Xenopus tropicalis (Western clawed frog), this protein is Lysine-specific demethylase 2A (kdm2a).